Here is a 64-residue protein sequence, read N- to C-terminus: Prokaryotic ubiquitin-like protein UBact (64 aa).

2 stretches are compositionally biased toward basic and acidic residues: residues 1–12 (MSDLFRMEERRQ) and 33–64 (PDVK…RSGE). The disordered stretch occupies residues 1–64 (MSDLFRMEER…ARRYRQRSGE (64 aa)). Glu64 participates in a covalent cross-link: Isoglutamyl lysine isopeptide (Glu-Lys) (interchain with K-? in acceptor proteins).

It belongs to the ubiquitin-like protein UBact family.

In terms of biological role, may function as a protein modifier covalently attached to lysine residues of substrate proteins. This may serve to target the modified proteins for degradation by proteasomes. In Chthonomonas calidirosea (strain DSM 23976 / ICMP 18418 / T49), this protein is Prokaryotic ubiquitin-like protein UBact.